The primary structure comprises 192 residues: Phosphoheptose isomerase (192 aa).

One can recognise an SIS domain in the interval 35 to 192 (LIETLENQGK…CIERHFANKN (158 aa)). 50 to 52 (NGG) is a binding site for substrate. His59 and Glu63 together coordinate Zn(2+). Substrate-binding positions include Glu63, 92-93 (ND), 118-120 (STS), Ser123, and Gln170. Positions 170 and 178 each coordinate Zn(2+).

Belongs to the SIS family. GmhA subfamily. As to quaternary structure, homotetramer. Requires Zn(2+) as cofactor.

It localises to the cytoplasm. It catalyses the reaction 2 D-sedoheptulose 7-phosphate = D-glycero-alpha-D-manno-heptose 7-phosphate + D-glycero-beta-D-manno-heptose 7-phosphate. It participates in carbohydrate biosynthesis; D-glycero-D-manno-heptose 7-phosphate biosynthesis; D-glycero-alpha-D-manno-heptose 7-phosphate and D-glycero-beta-D-manno-heptose 7-phosphate from sedoheptulose 7-phosphate: step 1/1. Its function is as follows. Catalyzes the isomerization of sedoheptulose 7-phosphate in D-glycero-D-manno-heptose 7-phosphate. This chain is Phosphoheptose isomerase, found in Helicobacter pylori (strain Shi470).